The following is a 660-amino-acid chain: Bifunctional polymyxin resistance protein ArnA (660 aa).

The formyltransferase ArnAFT stretch occupies residues methionine 1 to leucine 304. Residue histidine 86 to isoleucine 88 coordinates (6R)-10-formyltetrahydrofolate. Histidine 104 serves as the catalytic Proton donor; for formyltransferase activity. (6R)-10-formyltetrahydrofolate is bound by residues arginine 114 and valine 136 to aspartate 140. The tract at residues arginine 314 to serine 660 is dehydrogenase ArnADH. Residues aspartate 347 and aspartate 368–isoleucine 369 each bind NAD(+). UDP-alpha-D-glucuronate contacts are provided by residues alanine 393, tyrosine 398, and threonine 432 to serine 433. The Proton acceptor; for decarboxylase activity role is filled by glutamate 434. Residues arginine 460, asparagine 492, lysine 526–arginine 535, and tyrosine 613 each bind UDP-alpha-D-glucuronate. Arginine 619 (proton donor; for decarboxylase activity) is an active-site residue.

This sequence in the N-terminal section; belongs to the Fmt family. UDP-L-Ara4N formyltransferase subfamily. It in the C-terminal section; belongs to the NAD(P)-dependent epimerase/dehydratase family. UDP-glucuronic acid decarboxylase subfamily. As to quaternary structure, homohexamer, formed by a dimer of trimers.

It carries out the reaction UDP-alpha-D-glucuronate + NAD(+) = UDP-beta-L-threo-pentopyranos-4-ulose + CO2 + NADH. The enzyme catalyses UDP-4-amino-4-deoxy-beta-L-arabinose + (6R)-10-formyltetrahydrofolate = UDP-4-deoxy-4-formamido-beta-L-arabinose + (6S)-5,6,7,8-tetrahydrofolate + H(+). It participates in nucleotide-sugar biosynthesis; UDP-4-deoxy-4-formamido-beta-L-arabinose biosynthesis; UDP-4-deoxy-4-formamido-beta-L-arabinose from UDP-alpha-D-glucuronate: step 1/3. It functions in the pathway nucleotide-sugar biosynthesis; UDP-4-deoxy-4-formamido-beta-L-arabinose biosynthesis; UDP-4-deoxy-4-formamido-beta-L-arabinose from UDP-alpha-D-glucuronate: step 3/3. Its pathway is bacterial outer membrane biogenesis; lipopolysaccharide biosynthesis. Bifunctional enzyme that catalyzes the oxidative decarboxylation of UDP-glucuronic acid (UDP-GlcUA) to UDP-4-keto-arabinose (UDP-Ara4O) and the addition of a formyl group to UDP-4-amino-4-deoxy-L-arabinose (UDP-L-Ara4N) to form UDP-L-4-formamido-arabinose (UDP-L-Ara4FN). The modified arabinose is attached to lipid A and is required for resistance to polymyxin and cationic antimicrobial peptides. In Escherichia coli O127:H6 (strain E2348/69 / EPEC), this protein is Bifunctional polymyxin resistance protein ArnA.